An 830-amino-acid polypeptide reads, in one-letter code: Receptor-like protein kinase HERK 1 (830 aa).

The N-terminal stretch at 1–24 (MGIEKFETFILISTISILLCICHG) is a signal peptide. Topologically, residues 25–405 (FTPVDNYLIN…SSSSSKSNLG (381 aa)) are extracellular. N-linked (GlcNAc...) asparagine glycans are attached at residues Asn-40, Asn-146, Asn-217, Asn-280, and Asn-381. The chain crosses the membrane as a helical span at residues 406–426 (LIVGSAIGSLLAVVFLGSCFV). Topologically, residues 427–830 (LYKKRKRGQD…FSQLVKSEGR (404 aa)) are cytoplasmic. A Protein kinase domain is found at 485–758 (FDESRNIGVG…GDVLWNLEYA (274 aa)). Residues 491–499 (IGVGGFGKV) and Lys-513 contribute to the ATP site. The active-site Proton acceptor is the Asp-609.

It belongs to the protein kinase superfamily. Ser/Thr protein kinase family. Autophosphorylated. As to expression, expressed in most vegetative tissues, including leaves, stems and roots, especially in cell elongation regions.

It is found in the cell membrane. In terms of biological role, receptor-like protein kinase required for cell elongation during vegetative growth, mostly in a brassinosteroid-(BR-) independent manner. The protein is Receptor-like protein kinase HERK 1 (HERK1) of Arabidopsis thaliana (Mouse-ear cress).